The primary structure comprises 352 residues: Chorismate synthase (352 aa).

Arg-48 is a binding site for NADP(+). FMN contacts are provided by residues 125-127, 238-239, Gly-278, 293-297, and Arg-319; these read RSS, NA, and KPTSS.

It belongs to the chorismate synthase family. As to quaternary structure, homotetramer. It depends on FMNH2 as a cofactor.

The enzyme catalyses 5-O-(1-carboxyvinyl)-3-phosphoshikimate = chorismate + phosphate. The protein operates within metabolic intermediate biosynthesis; chorismate biosynthesis; chorismate from D-erythrose 4-phosphate and phosphoenolpyruvate: step 7/7. Catalyzes the anti-1,4-elimination of the C-3 phosphate and the C-6 proR hydrogen from 5-enolpyruvylshikimate-3-phosphate (EPSP) to yield chorismate, which is the branch point compound that serves as the starting substrate for the three terminal pathways of aromatic amino acid biosynthesis. This reaction introduces a second double bond into the aromatic ring system. The sequence is that of Chorismate synthase from Legionella pneumophila (strain Lens).